A 502-amino-acid chain; its full sequence is Probable cytosol aminopeptidase (502 aa).

Mn(2+) is bound by residues Lys-265 and Asp-270. Lys-277 is an active-site residue. Positions 288, 347, and 349 each coordinate Mn(2+). Arg-351 is a catalytic residue.

It belongs to the peptidase M17 family. Requires Mn(2+) as cofactor.

It is found in the cytoplasm. It catalyses the reaction Release of an N-terminal amino acid, Xaa-|-Yaa-, in which Xaa is preferably Leu, but may be other amino acids including Pro although not Arg or Lys, and Yaa may be Pro. Amino acid amides and methyl esters are also readily hydrolyzed, but rates on arylamides are exceedingly low.. The enzyme catalyses Release of an N-terminal amino acid, preferentially leucine, but not glutamic or aspartic acids.. Presumably involved in the processing and regular turnover of intracellular proteins. Catalyzes the removal of unsubstituted N-terminal amino acids from various peptides. The chain is Probable cytosol aminopeptidase from Rickettsia bellii (strain OSU 85-389).